We begin with the raw amino-acid sequence, 1300 residues long: Phospholipid-transporting ATPase IK (1300 aa).

A compositionally biased stretch (polar residues) spans 1 to 11 (MGTGPAQTPRS). A disordered region spans residues 1–98 (MGTGPAQTPR…SLGQREDLQD (98 aa)). Topologically, residues 1 to 149 (MGTGPAQTPR…TAKYNFYSFL (149 aa)) are cytoplasmic. The segment covering 65–74 (RRHKAQPGRA) has biased composition (basic residues). Residues 150–171 (PLNLYEQFHRVSNLFFLIIIIL) traverse the membrane as a helical segment. At 172-177 (QSIPDI) the chain is on the exoplasmic loop side. A helical transmembrane segment spans residues 178–197 (STLPWFSLSTPMVCLLFIRA). Over 198–381 (TRDLVDDMGR…TKLDLLMNKL (184 aa)) the chain is Cytoplasmic. The helical transmembrane segment at 382–403 (VVVIFISVVLVCLVLAFGFGFS) threads the bilayer. Residues 404–430 (VKEFKDHHYYLSGVHGSSVAAESFFVF) are Exoplasmic loop-facing. Residues 431–452 (WSFLILLSVTIPMSMFILSEFI) traverse the membrane as a helical segment. At 453-995 (YLGNSVFIDW…GRWSYVRICK (543 aa)) the chain is on the cytoplasmic side. The active-site 4-aspartylphosphate intermediate is aspartate 495. ATP is bound by residues aspartate 495, lysine 496, threonine 497, glutamate 596, phenylalanine 637, lysine 660, arginine 693, threonine 763, glycine 764, aspartate 765, arginine 913, and lysine 919. Aspartate 495 contributes to the Mg(2+) binding site. Threonine 497 lines the Mg(2+) pocket. Mg(2+) is bound at residue aspartate 939. The ATP site is built by asparagine 942 and aspartate 943. Aspartate 943 is a binding site for Mg(2+). A helical transmembrane segment spans residues 996-1016 (FLRYFFYKSMASMMVQVWFAC). At 1017–1028 (YNGFTGQPLYEG) the chain is on the exoplasmic loop side. The helical transmembrane segment at 1029-1048 (WFLALFNLLYSTLPVLYIGL) threads the bilayer. The Cytoplasmic portion of the chain corresponds to 1049 to 1078 (FEQDVSAEQSLEKPELYVVGQKDELFNYWV). Residues 1079–1100 (FVQAIAHGVTTSLVNFFMTLWI) form a helical membrane-spanning segment. Residues 1101-1112 (SRDTAGPASFSD) lie on the Exoplasmic loop side of the membrane. The chain crosses the membrane as a helical span at residues 1113 to 1135 (HQSFAVVVALSCLLSITMEVILI). Topologically, residues 1136-1141 (IKYWTA) are cytoplasmic. A helical transmembrane segment spans residues 1142–1162 (LCVATILLSLGFYAIMTTTTQ). Topologically, residues 1163–1182 (SFWLFRVSPTTFPFLYADLS) are exoplasmic loop. A helical transmembrane segment spans residues 1183–1207 (VMSSPSILLVVLLSVSINTFPVLAL). Residues 1208-1300 (RVIFPALKEL…EAASSPKESQ (93 aa)) lie on the Cytoplasmic side of the membrane. The interval 1272–1300 (RGPGVSSDIASESLDPSDEEAASSPKESQ) is disordered.

Belongs to the cation transport ATPase (P-type) (TC 3.A.3) family. Type IV subfamily. Mg(2+) is required as a cofactor. Isoform 3 was only detected in testis.

Its subcellular location is the cytoplasmic vesicle. It is found in the secretory vesicle. The protein localises to the acrosome membrane. It localises to the endoplasmic reticulum membrane. The catalysed reaction is ATP + H2O + phospholipidSide 1 = ADP + phosphate + phospholipidSide 2.. It carries out the reaction a 1,2-diacyl-sn-glycero-3-phospho-L-serine(out) + ATP + H2O = a 1,2-diacyl-sn-glycero-3-phospho-L-serine(in) + ADP + phosphate + H(+). In terms of biological role, P4-ATPase flippase which catalyzes the hydrolysis of ATP coupled to the transport of aminophospholipids from the outer to the inner leaflet of various membranes and ensures the maintenance of asymmetric distribution of phospholipids. Phospholipid translocation also seems to be implicated in vesicle formation and in uptake of lipid signaling molecules. May be responsible for the maintenance of asymmetric distribution of phosphatidylserine (PS) in spermatozoa membranes. Involved in acrosome reactions and binding of spermatozoa to zona pellucida. This Homo sapiens (Human) protein is Phospholipid-transporting ATPase IK.